Reading from the N-terminus, the 288-residue chain is 4-hydroxy-tetrahydrodipicolinate synthase (288 aa).

Thr-43 contributes to the pyruvate binding site. Tyr-131 serves as the catalytic Proton donor/acceptor. The active-site Schiff-base intermediate with substrate is the Lys-160. Residue Ile-200 participates in pyruvate binding.

It belongs to the DapA family. Homotetramer; dimer of dimers.

It localises to the cytoplasm. It carries out the reaction L-aspartate 4-semialdehyde + pyruvate = (2S,4S)-4-hydroxy-2,3,4,5-tetrahydrodipicolinate + H2O + H(+). Its pathway is amino-acid biosynthesis; L-lysine biosynthesis via DAP pathway; (S)-tetrahydrodipicolinate from L-aspartate: step 3/4. In terms of biological role, catalyzes the condensation of (S)-aspartate-beta-semialdehyde [(S)-ASA] and pyruvate to 4-hydroxy-tetrahydrodipicolinate (HTPA). The chain is 4-hydroxy-tetrahydrodipicolinate synthase from Methanococcus aeolicus (strain ATCC BAA-1280 / DSM 17508 / OCM 812 / Nankai-3).